We begin with the raw amino-acid sequence, 264 residues long: Thymidylate synthase (264 aa).

DUMP is bound at residue Arg21. A (6R)-5,10-methylene-5,6,7,8-tetrahydrofolate-binding site is contributed by His51. 126 to 127 contributes to the dUMP binding site; the sequence is RR. The active-site Nucleophile is the Cys146. DUMP-binding positions include 166 to 169, Asn177, and 207 to 209; these read RSAD and HIY. Residue Asp169 participates in (6R)-5,10-methylene-5,6,7,8-tetrahydrofolate binding. Position 263 (Ala263) interacts with (6R)-5,10-methylene-5,6,7,8-tetrahydrofolate.

It belongs to the thymidylate synthase family. Bacterial-type ThyA subfamily. As to quaternary structure, homodimer.

The protein localises to the cytoplasm. The enzyme catalyses dUMP + (6R)-5,10-methylene-5,6,7,8-tetrahydrofolate = 7,8-dihydrofolate + dTMP. Its pathway is pyrimidine metabolism; dTTP biosynthesis. Its function is as follows. Catalyzes the reductive methylation of 2'-deoxyuridine-5'-monophosphate (dUMP) to 2'-deoxythymidine-5'-monophosphate (dTMP) while utilizing 5,10-methylenetetrahydrofolate (mTHF) as the methyl donor and reductant in the reaction, yielding dihydrofolate (DHF) as a by-product. This enzymatic reaction provides an intracellular de novo source of dTMP, an essential precursor for DNA biosynthesis. The chain is Thymidylate synthase from Bacteroides fragilis (strain ATCC 25285 / DSM 2151 / CCUG 4856 / JCM 11019 / LMG 10263 / NCTC 9343 / Onslow / VPI 2553 / EN-2).